We begin with the raw amino-acid sequence, 25 residues long: Non-specific lipid-transfer protein 3 (25 aa).

In terms of tissue distribution, seeds (at protein level).

In terms of biological role, plant non-specific lipid-transfer proteins transfer phospholipids as well as galactolipids across membranes. May play a role in wax or cutin deposition in the cell walls of expanding epidermal cells and certain secretory tissues. Has antibacterial and antifungal activity. Displays antibacterial activity towards both Gram-negative bacteria, P.carotovorum (IC(50)=11.5 uM) and P.syringae (IC(50)=12.0 uM), and Gram-positive bacterium C.michiganensis subsp michiganense (IC(50)=11.2 uM). Also displays antifungal activity towards A.niger VKM F-33 (IC(50)=1.05 uM) and B.cinerea TSKHA (IC(50)=1.88 uM) and relatively moderate activity towards B.sorokiniana VKM F-1448 (IC(50)=1.55 uM). Displays some inhibitory activity towards P.infestans OSV12. This Nigella sativa (Black cumin) protein is Non-specific lipid-transfer protein 3.